The primary structure comprises 631 residues: tRNA 5-methylaminomethyl-2-thiouridine biosynthesis bifunctional protein MnmC (631 aa).

The interval 1-243 (MITDLRPPAM…KREMLTGRLP (243 aa)) is tRNA (mnm(5)s(2)U34)-methyltransferase. An FAD-dependent cmnm(5)s(2)U34 oxidoreductase region spans residues 261-631 (IGAGIAGAAL…GRLYRNQLTV (371 aa)).

In the N-terminal section; belongs to the methyltransferase superfamily. tRNA (mnm(5)s(2)U34)-methyltransferase family. It in the C-terminal section; belongs to the DAO family. The cofactor is FAD.

It localises to the cytoplasm. It carries out the reaction 5-aminomethyl-2-thiouridine(34) in tRNA + S-adenosyl-L-methionine = 5-methylaminomethyl-2-thiouridine(34) in tRNA + S-adenosyl-L-homocysteine + H(+). Catalyzes the last two steps in the biosynthesis of 5-methylaminomethyl-2-thiouridine (mnm(5)s(2)U) at the wobble position (U34) in tRNA. Catalyzes the FAD-dependent demodification of cmnm(5)s(2)U34 to nm(5)s(2)U34, followed by the transfer of a methyl group from S-adenosyl-L-methionine to nm(5)s(2)U34, to form mnm(5)s(2)U34. The sequence is that of tRNA 5-methylaminomethyl-2-thiouridine biosynthesis bifunctional protein MnmC from Marinobacter nauticus (strain ATCC 700491 / DSM 11845 / VT8) (Marinobacter aquaeolei).